The chain runs to 85 residues: Beta-insect depressant toxin Lqh-dprIT3f (85 aa).

A signal peptide spans 1 to 21; it reads MKLLLLLTISASMLIEGLVNA. One can recognise an LCN-type CS-alpha/beta domain in the interval 22 to 82; that stretch reads DGYIRGGDGC…EWDYETDTCG (61 aa). Disulfide bonds link cysteine 31–cysteine 81, cysteine 35–cysteine 56, cysteine 42–cysteine 63, and cysteine 46–cysteine 65. Glycine 82 is modified (glycine amide).

It belongs to the long (4 C-C) scorpion toxin superfamily. Sodium channel inhibitor family. Beta subfamily. In terms of tissue distribution, expressed by the venom gland.

Its subcellular location is the secreted. Functionally, depressant insect beta-toxins cause a transient contraction paralysis followed by a slow flaccid paralysis. They bind voltage-independently at site-4 of sodium channels (Nav) and block action potentials, primarily by depolarizing the axonal membrane and suppressing the sodium current. This depressant toxin is active only on insects. It is found in a relatively small amount in the venom. The polypeptide is Beta-insect depressant toxin Lqh-dprIT3f (Leiurus hebraeus (Hebrew deathstalker scorpion)).